The primary structure comprises 371 residues: Peptidyl-prolyl cis-trans isomerase D (371 aa).

The 165-residue stretch at F8–Q172 folds into the PPIase cyclophilin-type domain. Residues S175–L202 form a disordered region. A compositionally biased stretch (acidic residues) spans D189–E201. TPR repeat units follow at residues A212–H245, A265–S303, and A308–D341.

This sequence belongs to the cyclophilin-type PPIase family. PPIase D subfamily.

Its subcellular location is the cytoplasm. The enzyme catalyses [protein]-peptidylproline (omega=180) = [protein]-peptidylproline (omega=0). In terms of biological role, PPIases accelerate the folding of proteins. It catalyzes the cis-trans isomerization of proline imidic peptide bonds in oligopeptides. In Amanita muscaria (Fly agaric), this protein is Peptidyl-prolyl cis-trans isomerase D (Cyp40).